The sequence spans 262 residues: Phosphoribosyl 1,2-cyclic phosphate 1,2-diphosphodiesterase (262 aa).

Residues histidine 6, histidine 8, aspartate 13, histidine 38, glutamate 63, histidine 76, histidine 193, aspartate 245, and histidine 247 each coordinate Mn(2+).

The protein belongs to the PHP family. The cofactor is Mn(2+).

The catalysed reaction is alpha-D-ribose 1,2-cyclic phosphate 5-phosphate + H2O = D-ribose 2,5-bisphosphate + H(+). It catalyses the reaction D-ribose 2,5-bisphosphate + H2O = D-ribose 5-phosphate + phosphate. Involved in degradation of methylphosphonate. Catalyzes the hydrolysis of the phosphate ester at carbon-1 of 5-phospho-D-ribose 1,2-cyclic phosphate to form ribose 2,5-bisphosphate. This intermediate is then hydrolyzed to ribose-5-phosphate and inorganic phosphate. In Eggerthella lenta (strain ATCC 25559 / DSM 2243 / CCUG 17323 / JCM 9979 / KCTC 3265 / NCTC 11813 / VPI 0255 / 1899 B) (Eubacterium lentum), this protein is Phosphoribosyl 1,2-cyclic phosphate 1,2-diphosphodiesterase.